Reading from the N-terminus, the 176-residue chain is Cytochrome b (176 aa).

The next 3 helical transmembrane spans lie at 33–53 (FGSLLGICLALQILTGIFLAM), 77–98 (WVLRYLHANGASMFFICLYLHV), and 113–133 (WNMGVILLFAVMATAFMGYVL). Residues H83 and H97 each contribute to the heme b site.

Belongs to the cytochrome b family. As to quaternary structure, the cytochrome bc1 complex contains 11 subunits: 3 respiratory subunits (MT-CYB, CYC1 and UQCRFS1), 2 core proteins (UQCRC1 and UQCRC2) and 6 low-molecular weight proteins (UQCRH/QCR6, UQCRB/QCR7, UQCRQ/QCR8, UQCR10/QCR9, UQCR11/QCR10 and a cleavage product of UQCRFS1). This cytochrome bc1 complex then forms a dimer. It depends on heme b as a cofactor.

It is found in the mitochondrion inner membrane. Functionally, component of the ubiquinol-cytochrome c reductase complex (complex III or cytochrome b-c1 complex) that is part of the mitochondrial respiratory chain. The b-c1 complex mediates electron transfer from ubiquinol to cytochrome c. Contributes to the generation of a proton gradient across the mitochondrial membrane that is then used for ATP synthesis. This chain is Cytochrome b (MT-CYB), found in Lasionycteris noctivagans (Silver-haired bat).